Reading from the N-terminus, the 138-residue chain is uncharacterized protein (138 aa).

2 helical membrane-spanning segments follow: residues 21-43 and 48-65; these read TAFILLIVLAGFGYTAYKIAGGA and SLIAAAIFALFISLYAII.

Its subcellular location is the cell membrane. This is an uncharacterized protein from Archaeoglobus fulgidus (strain ATCC 49558 / DSM 4304 / JCM 9628 / NBRC 100126 / VC-16).